The primary structure comprises 246 residues: tRNA pseudouridine synthase B (246 aa).

D44 serves as the catalytic Nucleophile.

This sequence belongs to the pseudouridine synthase TruB family. Type 1 subfamily.

It carries out the reaction uridine(55) in tRNA = pseudouridine(55) in tRNA. In terms of biological role, responsible for synthesis of pseudouridine from uracil-55 in the psi GC loop of transfer RNAs. The polypeptide is tRNA pseudouridine synthase B (Desulfotalea psychrophila (strain LSv54 / DSM 12343)).